The sequence spans 262 residues: Glutamate racemase (262 aa).

Residues 5 to 6 and 37 to 38 contribute to the substrate site; these read DS and YG. C69 (proton donor/acceptor) is an active-site residue. 70–71 is a binding site for substrate; sequence NT. Residue C181 is the Proton donor/acceptor of the active site. Position 182–183 (182–183) interacts with substrate; that stretch reads TH.

This sequence belongs to the aspartate/glutamate racemases family.

The enzyme catalyses L-glutamate = D-glutamate. It participates in cell wall biogenesis; peptidoglycan biosynthesis. Its function is as follows. Provides the (R)-glutamate required for cell wall biosynthesis. In Buchnera aphidicola subsp. Acyrthosiphon pisum (strain Tuc7), this protein is Glutamate racemase.